Consider the following 415-residue polypeptide: Serine hydroxymethyltransferase (415 aa).

Residues L117 and G121–L123 contribute to the (6S)-5,6,7,8-tetrahydrofolate site. K226 carries the post-translational modification N6-(pyridoxal phosphate)lysine. E241 contributes to the (6S)-5,6,7,8-tetrahydrofolate binding site.

This sequence belongs to the SHMT family. In terms of assembly, homodimer. Requires pyridoxal 5'-phosphate as cofactor.

It localises to the cytoplasm. It carries out the reaction (6R)-5,10-methylene-5,6,7,8-tetrahydrofolate + glycine + H2O = (6S)-5,6,7,8-tetrahydrofolate + L-serine. Its pathway is one-carbon metabolism; tetrahydrofolate interconversion. It functions in the pathway amino-acid biosynthesis; glycine biosynthesis; glycine from L-serine: step 1/1. In terms of biological role, catalyzes the reversible interconversion of serine and glycine with tetrahydrofolate (THF) serving as the one-carbon carrier. This reaction serves as the major source of one-carbon groups required for the biosynthesis of purines, thymidylate, methionine, and other important biomolecules. Also exhibits THF-independent aldolase activity toward beta-hydroxyamino acids, producing glycine and aldehydes, via a retro-aldol mechanism. This chain is Serine hydroxymethyltransferase, found in Bacillus subtilis (strain 168).